A 261-amino-acid chain; its full sequence is Ubiquinone biosynthesis O-methyltransferase (261 aa).

The disordered stretch occupies residues 1 to 22 (MTMQVDPSANSSAASSAAPGTT). Over residues 8–18 (SANSSAASSAA) the composition is skewed to low complexity. S-adenosyl-L-methionine is bound by residues arginine 55, glycine 86, aspartate 107, and methionine 149.

Belongs to the methyltransferase superfamily. UbiG/COQ3 family.

It catalyses the reaction a 3-demethylubiquinol + S-adenosyl-L-methionine = a ubiquinol + S-adenosyl-L-homocysteine + H(+). It carries out the reaction a 3-(all-trans-polyprenyl)benzene-1,2-diol + S-adenosyl-L-methionine = a 2-methoxy-6-(all-trans-polyprenyl)phenol + S-adenosyl-L-homocysteine + H(+). Its pathway is cofactor biosynthesis; ubiquinone biosynthesis. Its function is as follows. O-methyltransferase that catalyzes the 2 O-methylation steps in the ubiquinone biosynthetic pathway. The polypeptide is Ubiquinone biosynthesis O-methyltransferase (Nitrobacter winogradskyi (strain ATCC 25391 / DSM 10237 / CIP 104748 / NCIMB 11846 / Nb-255)).